Here is a 171-residue protein sequence, read N- to C-terminus: UPF0398 protein MGAS10270_Spy1470 (171 aa).

The protein belongs to the UPF0398 family.

The sequence is that of UPF0398 protein MGAS10270_Spy1470 from Streptococcus pyogenes serotype M2 (strain MGAS10270).